The sequence spans 237 residues: Ribonuclease PH (237 aa).

Residues R86 and 124–126 each bind phosphate; that span reads GTR.

This sequence belongs to the RNase PH family. In terms of assembly, homohexameric ring arranged as a trimer of dimers.

It catalyses the reaction tRNA(n+1) + phosphate = tRNA(n) + a ribonucleoside 5'-diphosphate. Functionally, phosphorolytic 3'-5' exoribonuclease that plays an important role in tRNA 3'-end maturation. Removes nucleotide residues following the 3'-CCA terminus of tRNAs; can also add nucleotides to the ends of RNA molecules by using nucleoside diphosphates as substrates, but this may not be physiologically important. Probably plays a role in initiation of 16S rRNA degradation (leading to ribosome degradation) during starvation. The protein is Ribonuclease PH of Shewanella frigidimarina (strain NCIMB 400).